Reading from the N-terminus, the 394-residue chain is Xylose isomerase (394 aa).

Catalysis depends on residues histidine 54 and aspartate 57. Mg(2+) contacts are provided by glutamate 181, glutamate 217, histidine 220, aspartate 245, aspartate 255, aspartate 257, and aspartate 292.

The protein belongs to the xylose isomerase family. As to quaternary structure, homotetramer. Mg(2+) serves as cofactor.

The protein resides in the cytoplasm. It carries out the reaction alpha-D-xylose = alpha-D-xylulofuranose. In Actinoplanes missouriensis (strain ATCC 14538 / DSM 43046 / CBS 188.64 / JCM 3121 / NBRC 102363 / NCIMB 12654 / NRRL B-3342 / UNCC 431), this protein is Xylose isomerase (xylA).